Consider the following 529-residue polypeptide: Intraflagellar transport protein 56 (529 aa).

The tract at residues 1–21 is disordered; it reads MLHNRMTTAFERSKEQEHEAA. The segment covering 11–21 has biased composition (basic and acidic residues); the sequence is ERSKEQEHEAA. TPR repeat units lie at residues 57–90, 154–187, 189–221, 285–321, 359–392, and 428–461; these read GNAD…KNPP, SADQ…QPEC, AIYM…AEDS, SEAR…EYTL, VLGR…PKES, and PVHR…SLQT.

It belongs to the IFT56 family.

It localises to the cell projection. The protein resides in the cilium. It is found in the flagellum. Its subcellular location is the cytoplasm. The protein localises to the cytoskeleton. It localises to the flagellum axoneme. The protein resides in the flagellum basal body. Functionally, component of the intraflagellar transport complex B (IFT-B) involved in flagellar assembly. The polypeptide is Intraflagellar transport protein 56 (Giardia intestinalis (strain ATCC 50803 / WB clone C6) (Giardia lamblia)).